The following is a 642-amino-acid chain: Probable glutamate--tRNA ligase, cytoplasmic (642 aa).

152–154 (RFP) serves as a coordination point for L-glutamate. The short motif at 157 to 166 (PNGRLHIGHA) is the 'HIGH' region element. ATP is bound at residue histidine 162. Residues aspartate 188, 326 to 330 (YDFAC), and arginine 344 contribute to the L-glutamate site. Residues glutamate 347 and 382–386 (VLSKR) each bind ATP. Positions 382-386 (VLSKR) match the 'KMSKS' region motif.

Belongs to the class-I aminoacyl-tRNA synthetase family. Glutamate--tRNA ligase type 2 subfamily.

It localises to the cytoplasm. The enzyme catalyses tRNA(Glu) + L-glutamate + ATP = L-glutamyl-tRNA(Glu) + AMP + diphosphate. In Encephalitozoon cuniculi (strain GB-M1) (Microsporidian parasite), this protein is Probable glutamate--tRNA ligase, cytoplasmic.